A 181-amino-acid polypeptide reads, in one-letter code: Salmonella anti-inflammatory response activator (181 aa).

Residues 4 to 24 (FVYIYILVIYGSYLWFSLGGN) form a helical membrane-spanning segment.

As to quaternary structure, interacts with host (human) STAT3.

The protein localises to the membrane. It localises to the host cytoplasm. Its function is as follows. A Salmonella strain-specific effector that induces a host STAT3-dependent anti-inflammatory pathway. In bacteria-infected host cells (human) leads to phosphorylation of host STAT3, at least on 'Tyr-705' and interleukin-10 (IL-10, IL10) production; expressing the gene alone in host cells induces STAT3 phosphorylation and IL-10 production. IL-10 production requires STAT3 in infected cells. Contributes to virulence in mouse infection models. Encoded in only a few S.typhimurium serovars, it may be a specific effector for adaptation to bovine hosts. The sequence is that of Salmonella anti-inflammatory response activator from Salmonella typhimurium (strain 14028s / SGSC 2262).